We begin with the raw amino-acid sequence, 599 residues long: Aspartate--tRNA ligase (599 aa).

E180 serves as a coordination point for L-aspartate. Residues 204–207 (QIFK) form an aspartate region. Residue R226 coordinates L-aspartate. Residues 226–228 (RDE) and Q235 each bind ATP. H454 is an L-aspartate binding site. ATP is bound at residue E488. Position 495 (R495) interacts with L-aspartate. ATP is bound at residue 540–543 (GLDR).

The protein belongs to the class-II aminoacyl-tRNA synthetase family. Type 1 subfamily. In terms of assembly, homodimer.

It localises to the cytoplasm. The catalysed reaction is tRNA(Asp) + L-aspartate + ATP = L-aspartyl-tRNA(Asp) + AMP + diphosphate. In terms of biological role, catalyzes the attachment of L-aspartate to tRNA(Asp) in a two-step reaction: L-aspartate is first activated by ATP to form Asp-AMP and then transferred to the acceptor end of tRNA(Asp). The polypeptide is Aspartate--tRNA ligase (Clostridium beijerinckii (strain ATCC 51743 / NCIMB 8052) (Clostridium acetobutylicum)).